The sequence spans 255 residues: Cyclase-like protein 1 (255 aa).

Positions 1–24 (MTRSVSFPLFLFAVVLSLSSSLLA) are cleaved as a signal peptide.

It belongs to the Cyclase 1 superfamily.

It localises to the secreted. Its subcellular location is the extracellular space. The protein resides in the extracellular matrix. Its function is as follows. Acts as a negative regulator of fumonisin B1- and pathogen-induced programmed cell death (PCD), and regulates pathogen-induced symptom development. May function redundantly with CYCLASE2 for normal plant growth, development and viability. The sequence is that of Cyclase-like protein 1 from Arabidopsis thaliana (Mouse-ear cress).